The chain runs to 358 residues: Protein-glutamate methylesterase/protein-glutamine glutaminase 3 (358 aa).

Residues 2–118 form the Response regulatory domain; sequence KILVVDDSAL…CGRLQEVAPL (117 aa). Aspartate 52 carries the post-translational modification 4-aspartylphosphate. The 171-residue stretch at 155–325 folds into the CheB-type methylesterase domain; sequence NNEDHQLAIM…VPSMPEALLK (171 aa). Active-site residues include serine 167, histidine 194, and aspartate 291.

Belongs to the CheB family. In terms of processing, phosphorylated by CheA. Phosphorylation of the N-terminal regulatory domain activates the methylesterase activity.

It is found in the cytoplasm. It catalyses the reaction [protein]-L-glutamate 5-O-methyl ester + H2O = L-glutamyl-[protein] + methanol + H(+). It carries out the reaction L-glutaminyl-[protein] + H2O = L-glutamyl-[protein] + NH4(+). In terms of biological role, involved in chemotaxis. Part of a chemotaxis signal transduction system that modulates chemotaxis in response to various stimuli. Catalyzes the demethylation of specific methylglutamate residues introduced into the chemoreceptors (methyl-accepting chemotaxis proteins or MCP) by CheR. Also mediates the irreversible deamidation of specific glutamine residues to glutamic acid. The chain is Protein-glutamate methylesterase/protein-glutamine glutaminase 3 from Vibrio cholerae serotype O1 (strain ATCC 39315 / El Tor Inaba N16961).